Here is a 253-residue protein sequence, read N- to C-terminus: CTP:phosphoglutamine cytidylyltransferase (253 aa).

The catalysed reaction is N(5)-phospho-L-glutamine + CTP + H(+) = N(5)-(cytidine 5'-diphosphoramidyl)-L-glutamine + diphosphate. It functions in the pathway capsule biogenesis; capsule polysaccharide biosynthesis. Functionally, involved in the biosynthesis of the O-methyl phosphoramidate (MeOPN) group found on the capsular polysaccharide (CPS) of C.jejuni. Catalyzes the formation of CDP-L-glutamine from CTP and L-glutamine phosphate. In the presence of MnCTP, catalyzes the displacement of pyrophosphate from CTP using phosphoramidate, methyl phosphate, methyl phosphonate, phosphate, arsenate, ethanolamine phosphate, (R/S)-glycerol-1-phosphate, glycerol-2-phosphate, serinol phosphate, L-serine phosphate and 3-phospho-D-glycerate as substrate in addition to L-glutamine phosphate. The sequence is that of CTP:phosphoglutamine cytidylyltransferase from Campylobacter jejuni subsp. jejuni serotype O:2 (strain ATCC 700819 / NCTC 11168).